The following is a 684-amino-acid chain: Threonine--tRNA ligase (684 aa).

Positions 1 to 60 constitute a TGS domain; sequence MSISITLHRSGTSRTQQVDTTTTGLDLFGSDRAVVAMRVDGNLVDLQRELHDGAEVEPVE. Positions 256-567 are catalytic; that stretch reads DHRKLGAELD…LTEHYAGAFP (312 aa). Residues C361, H412, and H544 each contribute to the Zn(2+) site.

This sequence belongs to the class-II aminoacyl-tRNA synthetase family. As to quaternary structure, homodimer. It depends on Zn(2+) as a cofactor.

The protein localises to the cytoplasm. It catalyses the reaction tRNA(Thr) + L-threonine + ATP = L-threonyl-tRNA(Thr) + AMP + diphosphate + H(+). Catalyzes the attachment of threonine to tRNA(Thr) in a two-step reaction: L-threonine is first activated by ATP to form Thr-AMP and then transferred to the acceptor end of tRNA(Thr). Also edits incorrectly charged L-seryl-tRNA(Thr). This chain is Threonine--tRNA ligase, found in Cutibacterium acnes (strain DSM 16379 / KPA171202) (Propionibacterium acnes).